The following is a 502-amino-acid chain: NAD(P)H-quinone oxidoreductase chain 4, chloroplastic (502 aa).

14 helical membrane passes run 4-24 (FPWLTVIVVLPISAGSSIFFV), 37-57 (YTICICLLEILLTTYAFCYHF), 86-106 (GLSIGPILLTGFITTLATLAA), 113-131 (SRLFHFLMLAMYSGQVGSF), 136-156 (LLLFFLMWELELIPVYLLLSM), 169-189 (FILYTAGGSIFLLMGVSGMGL), 210-230 (GLEIIFYFGFLIAYAVKSPII), 244-264 (HYSTCMLLAGILLKMGAYGLV), 274-294 (AHSIFSPWLVIVGAIQIIYAA), 307-327 (IAYSSVSHMGFTLIGIGSITD), 332-352 (GAILQIISHGFIGAALFFLAG), 388-408 (LALPGMSGFVAELVVFFGIIT), 418-438 (IVISFVMAIGMILTPIYSLSM), and 464-484 (LFVSICIFLPVVGIGIYPDFV).

The protein belongs to the complex I subunit 4 family.

The protein resides in the plastid. The protein localises to the chloroplast thylakoid membrane. The enzyme catalyses a plastoquinone + NADH + (n+1) H(+)(in) = a plastoquinol + NAD(+) + n H(+)(out). The catalysed reaction is a plastoquinone + NADPH + (n+1) H(+)(in) = a plastoquinol + NADP(+) + n H(+)(out). This is NAD(P)H-quinone oxidoreductase chain 4, chloroplastic from Calycanthus floridus var. glaucus (Eastern sweetshrub).